The chain runs to 275 residues: Probable ribosomal RNA small subunit methyltransferase A (275 aa).

S-adenosyl-L-methionine is bound by residues leucine 13, glycine 38, glutamate 59, aspartate 84, and asparagine 101.

Belongs to the class I-like SAM-binding methyltransferase superfamily. rRNA adenine N(6)-methyltransferase family. RsmA subfamily.

The protein localises to the cytoplasm. Functionally, specifically dimethylates two adjacent adenosines in the loop of a conserved hairpin near the 3'-end of 16S rRNA in the 30S particle. May play a critical role in biogenesis of 30S subunits. The polypeptide is Probable ribosomal RNA small subunit methyltransferase A (Methanocaldococcus jannaschii (strain ATCC 43067 / DSM 2661 / JAL-1 / JCM 10045 / NBRC 100440) (Methanococcus jannaschii)).